The following is a 520-amino-acid chain: RNA polymerase sigma factor sigA (520 aa).

The N-terminal 66 residues, 1 to 66, are a transit peptide targeting the chloroplast; it reads MTATPAVIGL…APATPKLTAV (66 aa). Gly residues predominate over residues 37 to 49; that stretch reads GGGGGGGGGGGGD. 3 disordered regions span residues 37–57, 87–117, and 171–190; these read GGGG…APPA, HHSS…AHAH, and SVSA…TKNG. A compositionally biased stretch (pro residues) spans 96-108; the sequence is APPPPPPPPPTPS. Basic residues predominate over residues 175–187; the sequence is RQRRMSGRRRGRT. Residues 305 to 318 carry the Polymerase core binding motif; sequence DLIQGGLIGLLRGI. The H-T-H motif DNA-binding region spans 479 to 498; the sequence is WEDISRQFGLSRERVRQVGL.

The protein belongs to the sigma-70 factor family. In terms of tissue distribution, expressed in shoots. Expressed in the tips of fully elongated leaves. Expressed in leaf blades.

The protein resides in the plastid. It localises to the chloroplast. Its function is as follows. Sigma factors are initiation factors that promote the attachment of plastid-encoded RNA polymerase (PEP) to specific initiation sites and are then released. Controls the transcription of the psaA and psaB genes in chloroplast, and thus maintains the abundance of the core protein complex PsaA-PsaB of photosystem I (PSI) in the thylakoid membrane. Maintains PSI activity, sufficient rate of electron transfer from PSII to PSI, and photochemical efficiency. The polypeptide is RNA polymerase sigma factor sigA (Oryza sativa subsp. japonica (Rice)).